The primary structure comprises 560 residues: Interferon alpha/beta receptor 1 (560 aa).

An N-terminal signal peptide occupies residues methionine 1–glycine 24. Topologically, residues alanine 25–glutamine 437 are extracellular. 4 Fibronectin type-III domains span residues serine 29 to alanine 125, histidine 133 to threonine 224, serine 231 to glutamine 329, and phenylalanine 333 to glycine 433. A glycan (N-linked (GlcNAc...) asparagine) is linked at asparagine 55. A disulfide bridge connects residues cysteine 76 and cysteine 84. N-linked (GlcNAc...) asparagine glycosylation is found at asparagine 85, asparagine 108, and asparagine 172. Cysteines 199 and 220 form a disulfide. 3 N-linked (GlcNAc...) asparagine glycosylation sites follow: asparagine 222, asparagine 249, and asparagine 254. The cysteines at positions 283 and 291 are disulfide-linked. Asparagine 313, asparagine 377, and asparagine 417 each carry an N-linked (GlcNAc...) asparagine glycan. Residues cysteine 404 and cysteine 427 are joined by a disulfide bond. The chain crosses the membrane as a helical span at residues alanine 438 to valine 458. Residues lysine 459–valine 560 lie on the Cytoplasmic side of the membrane. Residue cysteine 464 is the site of S-palmitoyl cysteine attachment. Residues tyrosine 467 and tyrosine 482 each carry the phosphotyrosine; by TYK2 modification. An important for interaction with TYK2 region spans residues leucine 492–glutamate 501. Phosphoserine is present on residues serine 496 and serine 536. Positions glutamine 520–valine 560 are disordered. A compositionally biased stretch (polar residues) spans arginine 527–tyrosine 539. Residues isoleucine 550–valine 560 show a composition bias toward basic and acidic residues.

This sequence belongs to the type II cytokine receptor family. As to quaternary structure, heterodimer with IFNAR2; forming the receptor for type I interferon. Interacts with TYK2. Interacts with STAT1 and STAT2; the interaction requires its phosphorylation at Tyr-482. Interacts (serine-phosphorylated form) with FBXW11, the substrate recognition component of a SCF (SKP1-CUL1-F-box protein) E3 ubiquitin-protein ligase complex. Interacts with SHMT2; this promotes interaction with ABRAXAS2 and the BRISC complex. Interacts with TRIM10; this interaction prevents association between IFNAR1 and TYK2. Ubiquitinated, leading to its internalization and degradation. Polyubiquitinated via 'Lys-48'-linked and 'Lys-63'-linked ubiquitin chains, leading to receptor internalization and lysosomal degradation. The 'Lys-63'-linked ubiquitin chains are cleaved off by the BRISC complex. Post-translationally, phosphorylated on tyrosine residues in response to interferon-binding: phosphorylation by TYK2 tyrosine kinase creates docking sites for STAT proteins. Phosphorylated on serine residues in response to interferon binding; this promotes interaction with FBXW11 and ubiquitination. In terms of processing, palmitoylation at Cys-464 is required for the activation of STAT1 and STAT2.

Its subcellular location is the cell membrane. The protein resides in the late endosome. It is found in the lysosome. Together with IFNAR2, forms the heterodimeric receptor for type I interferons (including interferons alpha, beta, epsilon, omega and kappa). Type I interferon binding activates the JAK-STAT signaling cascade, resulting in transcriptional activation or repression of interferon-regulated genes that encode the effectors of the interferon response. Mechanistically, type I interferon-binding brings the IFNAR1 and IFNAR2 subunits into close proximity with one another, driving their associated Janus kinases (JAKs) (TYK2 bound to IFNAR1 and JAK1 bound to IFNAR2) to cross-phosphorylate one another. The activated kinases phosphorylate specific tyrosine residues on the intracellular domains of IFNAR1 and IFNAR2, forming docking sites for the STAT transcription factors. STAT proteins are then phosphorylated by the JAKs, promoting their translocation into the nucleus to regulate expression of interferon-regulated genes. Can also act independently of IFNAR2: form an active IFNB1 receptor by itself and activate a signaling cascade that does not involve activation of the JAK-STAT pathway. In Sus scrofa (Pig), this protein is Interferon alpha/beta receptor 1 (IFNAR1).